The primary structure comprises 183 residues: Anterior gradient protein 1 (183 aa).

An N-terminal signal peptide occupies residues 1 to 18 (MQAGLSLVCLVLLCSALG).

It belongs to the AGR family. From stage 18 (neurula) onward, expressed in the cement gland until it degenerates. More weakly expressed in the adjacent hatching gland.

The protein localises to the secreted. Functionally, does not appear to be required for cement gland formation. The sequence is that of Anterior gradient protein 1 (ag1) from Xenopus laevis (African clawed frog).